The chain runs to 442 residues: ATP-dependent RNA helicase SUB2 (442 aa).

The short motif at 59-87 (TGFRDFLLKGELLRAITDCGFEHPSEVQQ) is the Q motif element. Positions 90–265 (IPTAILNVDV…KKFMRNPLEV (176 aa)) constitute a Helicase ATP-binding domain. 103–110 (AKSGLGKT) serves as a coordination point for ATP. The short motif at 212 to 215 (DECD) is the DECD box element. Positions 293 to 438 (KLNELLDSLE…EYPQGGVDSS (146 aa)) constitute a Helicase C-terminal domain.

The protein belongs to the DEAD box helicase family. DECD subfamily.

It localises to the nucleus. The enzyme catalyses ATP + H2O = ADP + phosphate + H(+). Its function is as follows. ATP-binding RNA helicase involved in transcription elongation and required for the export of mRNA out of the nucleus. SUB2 also plays a role in pre-mRNA splicing and spliceosome assembly. May be involved in rDNA and telomeric silencing, and maintenance of genome integrity. The sequence is that of ATP-dependent RNA helicase SUB2 (SUB2) from Ajellomyces capsulatus (strain NAm1 / WU24) (Darling's disease fungus).